We begin with the raw amino-acid sequence, 878 residues long: Interleukin-3 receptor class 2 subunit beta (878 aa).

Positions 1–22 are cleaved as a signal peptide; that stretch reads MDQQMALTWGLCYMALVALCWG. Topologically, residues 23 to 440 are extracellular; it reads HEVTEEEETV…SNEYTWTTDW (418 aa). Residues Cys39 and Cys49 are joined by a disulfide bond. N-linked (GlcNAc...) asparagine glycosylation occurs at Asn62. A disulfide bond links Cys78 and Cys95. Positions 139 to 244 constitute a Fibronectin type-III 1 domain; that stretch reads PPKDIHISPS…PEVHWDSQPG (106 aa). The disordered stretch occupies residues 223-244; sequence GSSLSGRPSRWSPEVHWDSQPG. Intrachain disulfides connect Cys254–Cys264 and Cys293–Cys310. One can recognise a Fibronectin type-III 2 domain in the interval 343 to 438; the sequence is QMEPPILNQT…EWSNEYTWTT (96 aa). Asn350 carries an N-linked (GlcNAc...) asparagine glycan. Positions 427–431 match the WSXWS motif motif; that stretch reads WSEWS. The chain crosses the membrane as a helical span at residues 441–462; sequence VMPTLWIVLILVFLIFTLLLAL. Over 463-878 the chain is Cytoplasmic; that stretch reads HFGRVYGYRT…AIQFFKSLKY (416 aa). A Box 1 motif motif is present at residues 476-484; sequence WKEKIPNPS. 2 disordered regions span residues 539 to 620 and 660 to 709; these read LTIE…GGSL and SSLE…MASD. Polar residues predominate over residues 554–570; the sequence is PDTTPAASSESTEQLPN. A compositionally biased stretch (basic and acidic residues) spans 671–689; it reads EPKENPPVELSVEKQEARD. Phosphoserine is present on residues Ser752 and Ser754. A Phosphotyrosine modification is found at Tyr765. Disordered stretches follow at residues 771-810 and 829-849; these read SVSQAATSPPGHPAPPVASSPTVIPGEPREEVGPASPHPE and PGSLSPHSKPPSPSLCSETED.

It belongs to the type I cytokine receptor family. Type 4 subfamily. In terms of assembly, heterodimer of an alpha and a beta subunit.

The protein resides in the membrane. Its function is as follows. In mouse, there are two classes of high-affinity IL3 receptors. One contains this IL3-specific beta subunit and the other contains the beta subunit also shared by high-affinity IL5 and GM-CSF receptors. The protein is Interleukin-3 receptor class 2 subunit beta (Csf2rb2) of Mus musculus (Mouse).